We begin with the raw amino-acid sequence, 131 residues long: Large-conductance mechanosensitive channel (131 aa).

2 helical membrane passes run 14-34 (VMDM…VTSL) and 71-91 (GNFI…FLLV).

This sequence belongs to the MscL family. In terms of assembly, homopentamer.

The protein resides in the cell inner membrane. Functionally, channel that opens in response to stretch forces in the membrane lipid bilayer. May participate in the regulation of osmotic pressure changes within the cell. The sequence is that of Large-conductance mechanosensitive channel from Dinoroseobacter shibae (strain DSM 16493 / NCIMB 14021 / DFL 12).